A 124-amino-acid polypeptide reads, in one-letter code: Ribonuclease pancreatic (124 aa).

The segment covering 1-13 has biased composition (basic and acidic residues); the sequence is KETAAAKFERQHM. The tract at residues 1-22 is disordered; that stretch reads KETAAAKFERQHMDSSTSAASS. Lys7 and Arg10 together coordinate substrate. His12 (proton acceptor) is an active-site residue. Intrachain disulfides connect Cys26-Cys84, Cys40-Cys95, Cys58-Cys110, and Cys65-Cys72. Asn34 is a glycosylation site (N-linked (GlcNAc...) asparagine). Substrate is bound by residues 41–45, Lys66, and Arg85; that span reads KPVNT. The Proton donor role is filled by His119.

Belongs to the pancreatic ribonuclease family. In terms of assembly, monomer. Interacts with and forms tight 1:1 complexes with RNH1. Dimerization of two such complexes may occur. Interaction with RNH1 inhibits this protein. As to expression, pancreas.

The protein resides in the secreted. The catalysed reaction is an [RNA] containing cytidine + H2O = an [RNA]-3'-cytidine-3'-phosphate + a 5'-hydroxy-ribonucleotide-3'-[RNA].. The enzyme catalyses an [RNA] containing uridine + H2O = an [RNA]-3'-uridine-3'-phosphate + a 5'-hydroxy-ribonucleotide-3'-[RNA].. Functionally, endonuclease that catalyzes the cleavage of RNA on the 3' side of pyrimidine nucleotides. Acts on single-stranded and double-stranded RNA. In Bison bison (American bison), this protein is Ribonuclease pancreatic (RNASE1).